The sequence spans 65 residues: Probable movement protein p8 (65 aa).

A compositionally biased stretch (polar residues) spans 1 to 10; that stretch reads MENTENVRSG. The tract at residues 1 to 47 is disordered; sequence MENTENVRSGRNQREYSKERQQEGGYKEVSKAAVRKEGDVKQDMGPS. Residues 12 to 42 show a composition bias toward basic and acidic residues; that stretch reads NQREYSKERQQEGGYKEVSKAAVRKEGDVKQ.

The protein belongs to the carmovirus/necrovirus/panicovirus movement protein p8 family.

Cell-to-cell movement. This is Probable movement protein p8 from Tobacco necrosis virus (strain D) (TNV-D).